The chain runs to 273 residues: Type II pantothenate kinase (273 aa).

An ATP-binding site is contributed by 8-15 (DAGGTLTK). Glu76 serves as the catalytic Proton acceptor. ATP-binding positions include Thr105, 127-131 (GGTIM), Phe143, and Ser230.

Belongs to the type II pantothenate kinase family. In terms of assembly, homodimer.

Its subcellular location is the cytoplasm. The catalysed reaction is (R)-pantothenate + ATP = (R)-4'-phosphopantothenate + ADP + H(+). It functions in the pathway cofactor biosynthesis; coenzyme A biosynthesis; CoA from (R)-pantothenate: step 1/5. Functionally, catalyzes the phosphorylation of pantothenate (Pan), the first step in CoA biosynthesis. The polypeptide is Type II pantothenate kinase (Bacillus cereus (strain G9842)).